A 142-amino-acid chain; its full sequence is Large ribosomal subunit protein uL13 (142 aa).

This sequence belongs to the universal ribosomal protein uL13 family. Part of the 50S ribosomal subunit.

Its function is as follows. This protein is one of the early assembly proteins of the 50S ribosomal subunit, although it is not seen to bind rRNA by itself. It is important during the early stages of 50S assembly. This is Large ribosomal subunit protein uL13 from Burkholderia mallei (strain NCTC 10247).